The sequence spans 89 residues: Small ribosomal subunit protein uS15 (89 aa).

Belongs to the universal ribosomal protein uS15 family. As to quaternary structure, part of the 30S ribosomal subunit. Forms a bridge to the 50S subunit in the 70S ribosome, contacting the 23S rRNA.

Its function is as follows. One of the primary rRNA binding proteins, it binds directly to 16S rRNA where it helps nucleate assembly of the platform of the 30S subunit by binding and bridging several RNA helices of the 16S rRNA. Functionally, forms an intersubunit bridge (bridge B4) with the 23S rRNA of the 50S subunit in the ribosome. This Acidithiobacillus ferrooxidans (strain ATCC 23270 / DSM 14882 / CIP 104768 / NCIMB 8455) (Ferrobacillus ferrooxidans (strain ATCC 23270)) protein is Small ribosomal subunit protein uS15.